We begin with the raw amino-acid sequence, 472 residues long: Glutamate--tRNA ligase 1 (472 aa).

The 'HIGH' region motif lies at 13–23; that stretch reads PSPTGYLHIGG. Residues cysteine 102, cysteine 104, cysteine 129, and glutamate 131 each contribute to the Zn(2+) site. Positions 239-243 match the 'KMSKS' region motif; the sequence is RLSKR. ATP is bound at residue lysine 242.

Belongs to the class-I aminoacyl-tRNA synthetase family. Glutamate--tRNA ligase type 1 subfamily. As to quaternary structure, monomer. Requires Zn(2+) as cofactor.

The protein localises to the cytoplasm. It carries out the reaction tRNA(Glu) + L-glutamate + ATP = L-glutamyl-tRNA(Glu) + AMP + diphosphate. Functionally, catalyzes the attachment of glutamate to tRNA(Glu) in a two-step reaction: glutamate is first activated by ATP to form Glu-AMP and then transferred to the acceptor end of tRNA(Glu). The protein is Glutamate--tRNA ligase 1 of Syntrophus aciditrophicus (strain SB).